We begin with the raw amino-acid sequence, 142 residues long: Universal stress protein C (142 aa).

The protein belongs to the universal stress protein A family.

The protein resides in the cytoplasm. In terms of biological role, required for resistance to DNA-damaging agents. This Salmonella typhimurium (strain LT2 / SGSC1412 / ATCC 700720) protein is Universal stress protein C (uspC).